A 623-amino-acid polypeptide reads, in one-letter code: EIN3-binding F-box protein 2 (623 aa).

The F-box domain occupies 52–106 (QTSIDVLPEECLFEILRRLPSGQERSACACVSKHWLNLLSSISRSEVNESSVQDV). LRR repeat units follow at residues 119–147 (GKKA…QIRG), 151–176 (ESKV…SLWN), 177–202 (LPAV…DLSR), 203–228 (CPGI…TIDS), 229–254 (CSGV…SIRS), 255–281 (CPRI…KLQM), 307–334 (LQGV…SVMS), 335–360 (CRGM…SLNK), 361–386 (CLLV…KLEE), 387–413 (CHRI…SLAN), 414–441 (CLGI…SIRC), 442–467 (CPGF…ELCG), 468–494 (LNGV…NLSE), 495–521 (CINV…NLDG), 522–547 (CKNI…DISN), 548–574 (TLVS…SIGG), 575–600 (CSSI…NIQR), and 601–623 (CGRI…DILY).

Part of a SCF (SKP1-cullin-F-box) protein ligase complex. Interacts with CUL1, SKP1A/ASK1, SKP1B/ASK2, EIN3, and EIL1. As to expression, ubiquitous.

Its subcellular location is the nucleus. The protein operates within protein modification; protein ubiquitination. Its function is as follows. Component of SCF(EBF1) E3 ubiquitin ligase complexes, which may mediate the ubiquitination and subsequent proteasomal degradation of target proteins (probably including EIN3 and EIL1). Regulator of the ethylene signaling cascade by modulating the stability of EIN3 and EIL1 proteins. The polypeptide is EIN3-binding F-box protein 2 (EBF2) (Arabidopsis thaliana (Mouse-ear cress)).